We begin with the raw amino-acid sequence, 156 residues long: NADH-ubiquinone oxidoreductase chain 6 (156 aa).

5 helical membrane passes run 1–21, 24–44, 49–69, 77–97, and 121–141; these read MILT…YLAS, IVLG…FASF, FAFL…AYFL, ISNF…SALT, and STAP…VIVV.

It belongs to the complex I subunit 6 family.

The protein localises to the mitochondrion membrane. The catalysed reaction is a ubiquinone + NADH + 5 H(+)(in) = a ubiquinol + NAD(+) + 4 H(+)(out). Core subunit of the mitochondrial membrane respiratory chain NADH dehydrogenase (Complex I) that is believed to belong to the minimal assembly required for catalysis. Complex I functions in the transfer of electrons from NADH to the respiratory chain. The immediate electron acceptor for the enzyme is believed to be ubiquinone. The chain is NADH-ubiquinone oxidoreductase chain 6 (ND6) from Lumbricus terrestris (Common earthworm).